The primary structure comprises 304 residues: Small ribosomal subunit biogenesis GTPase RsgA (304 aa).

Positions 70 to 229 (HNELNRPNIA…IADTPGFSKL (160 aa)) constitute a CP-type G domain. GTP-binding positions include 119–122 (TKID) and 172–180 (GQTGVGKST). Residues Cys253, Cys259, His261, and Cys267 each contribute to the Zn(2+) site.

It belongs to the TRAFAC class YlqF/YawG GTPase family. RsgA subfamily. Monomer. Associates with 30S ribosomal subunit, binds 16S rRNA. The cofactor is Zn(2+).

The protein resides in the cytoplasm. Functionally, one of several proteins that assist in the late maturation steps of the functional core of the 30S ribosomal subunit. Helps release RbfA from mature subunits. May play a role in the assembly of ribosomal proteins into the subunit. Circularly permuted GTPase that catalyzes slow GTP hydrolysis, GTPase activity is stimulated by the 30S ribosomal subunit. The polypeptide is Small ribosomal subunit biogenesis GTPase RsgA (Phytoplasma mali (strain AT)).